A 322-amino-acid chain; its full sequence is Cytochrome c biogenesis protein CcsA (322 aa).

A run of 8 helical transmembrane segments spans residues 9–29 (ILTH…LITL), 44–64 (GMIA…IYSG), 71–91 (LYES…VPYF), 98–118 (LTTI…SGLL), 143–163 (MILS…LLVI), 226–246 (VISL…VWAN), 253–273 (WSWD…AIYL), and 287–307 (AIVA…VNLL).

This sequence belongs to the CcmF/CycK/Ccl1/NrfE/CcsA family. In terms of assembly, may interact with Ccs1.

It is found in the plastid. Its subcellular location is the chloroplast thylakoid membrane. Its function is as follows. Required during biogenesis of c-type cytochromes (cytochrome c6 and cytochrome f) at the step of heme attachment. The sequence is that of Cytochrome c biogenesis protein CcsA from Guizotia abyssinica (Niger).